The following is a 247-amino-acid chain: Probable phosphatase swp_1620 (247 aa).

Zn(2+)-binding residues include His8, His10, His16, His41, Glu74, His102, His132, Asp193, and His195.

Belongs to the PHP family. The cofactor is Zn(2+).

The chain is Probable phosphatase swp_1620 from Shewanella piezotolerans (strain WP3 / JCM 13877).